The sequence spans 471 residues: U1 small nuclear ribonucleoprotein 70 kDa (471 aa).

Positions Phe-48–Arg-78 are disordered. A compositionally biased stretch (basic and acidic residues) spans Ala-60–Arg-78. The required for interaction with U1 RNA stretch occupies residues His-92–Gly-205. The 82-residue stretch at Lys-103–Gly-184 folds into the RRM domain. The interval Trp-190–Glu-471 is disordered. Gly residues predominate over residues Leu-195 to Arg-204. Residues Asn-210–Glu-246 show a composition bias toward basic and acidic residues. A compositionally biased stretch (basic residues) spans Arg-247–Ser-261. Positions Arg-262–Arg-288 are enriched in basic and acidic residues. Positions Asp-289–Glu-298 are enriched in basic residues. A compositionally biased stretch (basic and acidic residues) spans Arg-299–Ala-316. Acidic residues predominate over residues Glu-317 to Gln-326. Residues Ile-339–Pro-428 are compositionally biased toward basic and acidic residues.

Component of the U1 snRNP. The U1 snRNP is composed of the U1 snRNA and the 7 core Sm proteins snrpb, snrpd1, snrpd2, snrpd3, snrpe, snrpf and snrpg that assemble in a heptameric protein ring on the Sm site of the small nuclear RNA to form the core snRNP, and at least three U1 snRNP-specific proteins snrnp70/U1-70K, snrpa/U1-A and snrpc/U1-C.

The protein resides in the nucleus speckle. It is found in the nucleus. The protein localises to the nucleoplasm. Its function is as follows. Component of the spliceosomal U1 snRNP, which is essential for recognition of the pre-mRNA 5' splice-site and the subsequent assembly of the spliceosome. snrnp70 binds to the loop I region of U1-snRNA. This is U1 small nuclear ribonucleoprotein 70 kDa (snrnp70) from Xenopus laevis (African clawed frog).